The chain runs to 692 residues: Elongation factor G (692 aa).

The tr-type G domain maps to 8 to 283 (NRIRNIGIAA…AVIDYLPAPT (276 aa)). Residues 17–24 (AHIDAGKT), 81–85 (DTPGH), and 135–138 (NKMD) contribute to the GTP site.

The protein belongs to the TRAFAC class translation factor GTPase superfamily. Classic translation factor GTPase family. EF-G/EF-2 subfamily.

The protein resides in the cytoplasm. In terms of biological role, catalyzes the GTP-dependent ribosomal translocation step during translation elongation. During this step, the ribosome changes from the pre-translocational (PRE) to the post-translocational (POST) state as the newly formed A-site-bound peptidyl-tRNA and P-site-bound deacylated tRNA move to the P and E sites, respectively. Catalyzes the coordinated movement of the two tRNA molecules, the mRNA and conformational changes in the ribosome. The protein is Elongation factor G of Helicobacter pylori (strain P12).